A 405-amino-acid polypeptide reads, in one-letter code: Zinc finger protein ubi-d4 (405 aa).

4 disordered regions span residues 80–147 (RKKR…GEFP), 165–194 (DDLDDEDYEEDTPKRRGKGKAKGKGVGGAR), 210–230 (ACDNSYKQKHSLKPPDRVCGK), and 248–280 (AEEEGDDKDDSQPPTPVSQRSEEQKSKKGPDGL). Composition is skewed to basic and acidic residues over residues 100 to 110 (PDTDQTLKKEG) and 126 to 140 (DPLEKRSLPDPRMDD). Over residues 165–174 (DDLDDEDYEE) the composition is skewed to acidic residues. A C2H2-type; atypical zinc finger spans residues 209–246 (YACDNSYKQKHSLKPPDRVCGKRYKNRPGLSYHYAHSH). A compositionally biased stretch (basic and acidic residues) spans 267-277 (RSEEQKSKKGP). 2 consecutive PHD-type zinc fingers follow at residues 284-344 (NNYC…CKCC) and 341-391 (CKCC…CLDL).

The protein belongs to the requiem/DPF family.

The protein resides in the cytoplasm. It is found in the nucleus. Functionally, may be a transcription factor required for the apoptosis response following survival factor withdrawal from myeloid cells. Might also have a role in the development and maturation of lymphoid cells. This is Zinc finger protein ubi-d4 (REQ) from Gallus gallus (Chicken).